A 150-amino-acid chain; its full sequence is Endoribonuclease YbeY (150 aa).

3 residues coordinate Zn(2+): His112, His116, and His122.

This sequence belongs to the endoribonuclease YbeY family. It depends on Zn(2+) as a cofactor.

It is found in the cytoplasm. Its function is as follows. Single strand-specific metallo-endoribonuclease involved in late-stage 70S ribosome quality control and in maturation of the 3' terminus of the 16S rRNA. In Geobacter metallireducens (strain ATCC 53774 / DSM 7210 / GS-15), this protein is Endoribonuclease YbeY.